Here is a 65-residue protein sequence, read N- to C-terminus: Ferredoxin-like protein in vnf region (65 aa).

2 consecutive 4Fe-4S ferredoxin-type domains span residues 2 to 29 and 30 to 65; these read AMAI…VLQG and GIYV…PLDD. 8 residues coordinate [4Fe-4S] cluster: cysteine 10, cysteine 13, cysteine 16, cysteine 20, cysteine 39, cysteine 42, cysteine 50, and cysteine 54.

[4Fe-4S] cluster serves as cofactor.

The protein is Ferredoxin-like protein in vnf region of Azotobacter chroococcum mcd 1.